Consider the following 471-residue polypeptide: UDP-N-acetylmuramoylalanine--D-glutamate ligase (471 aa).

Residue 127 to 133 (GSNGKST) participates in ATP binding.

It belongs to the MurCDEF family.

The protein localises to the cytoplasm. It carries out the reaction UDP-N-acetyl-alpha-D-muramoyl-L-alanine + D-glutamate + ATP = UDP-N-acetyl-alpha-D-muramoyl-L-alanyl-D-glutamate + ADP + phosphate + H(+). The protein operates within cell wall biogenesis; peptidoglycan biosynthesis. Its function is as follows. Cell wall formation. Catalyzes the addition of glutamate to the nucleotide precursor UDP-N-acetylmuramoyl-L-alanine (UMA). The chain is UDP-N-acetylmuramoylalanine--D-glutamate ligase from Colwellia psychrerythraea (strain 34H / ATCC BAA-681) (Vibrio psychroerythus).